The primary structure comprises 300 residues: Metal tolerance protein 12 (300 aa).

Topologically, residues 1–26 (MESPESFSTMFMKPIRHILSEKKSRK) are cytoplasmic. The chain crosses the membrane as a helical span at residues 27 to 47 (IALFLLINTAYMVVEFVAGFM). Residues 48–50 (SNS) are Vacuolar-facing. Residues 51 to 71 (LGLISDACHMLFDCAALAIGL) form a helical membrane-spanning segment. At 72 to 91 (YASYISRLPANHQYNYGRGR) the chain is on the cytoplasmic side. The helical transmembrane segment at 92 to 112 (FEVLSGYVNAVFLVLVGALIV) threads the bilayer. Over 113-128 (LESIERILDPQEISTN) the chain is Vacuolar. A helical transmembrane segment spans residues 129-149 (SLLVVSVGGLLVNIVGLIFFH). The Cytoplasmic portion of the chain corresponds to 150–160 (EEHHHAHGGSG). A helical membrane pass occupies residues 161 to 181 (IFLHVLADTMGSVGVVISTLL). At 182-186 (IKYKG) the chain is on the vacuolar side. A helical membrane pass occupies residues 187 to 207 (WLVADPASSIFISILIIASVI). Residues 208 to 300 (PLLRNSAEIL…WTLQVESVNS (93 aa)) are Cytoplasmic-facing.

This sequence belongs to the cation diffusion facilitator (CDF) transporter (TC 2.A.4) family. SLC30A subfamily.

It is found in the vacuole membrane. Its function is as follows. Involved in sequestration of excess metal in the cytoplasm into vacuoles to maintain metal homeostasis. The protein is Metal tolerance protein 12 (MTP12) of Arabidopsis thaliana (Mouse-ear cress).